Reading from the N-terminus, the 242-residue chain is Succinyl-CoA:3-ketoacid coenzyme A transferase subunit A (242 aa).

33–39 (GGFGLCG) provides a ligand contact to CoA.

Belongs to the 3-oxoacid CoA-transferase subunit A family. Heterodimer of a subunit A and a subunit B.

The catalysed reaction is a 3-oxo acid + succinyl-CoA = a 3-oxoacyl-CoA + succinate. It functions in the pathway bacterial outer membrane biogenesis; lipopolysaccharide biosynthesis. This chain is Succinyl-CoA:3-ketoacid coenzyme A transferase subunit A (lpsI), found in Xanthomonas campestris pv. campestris (strain B100).